The primary structure comprises 188 residues: Pyridoxal 5'-phosphate synthase subunit PdxT (188 aa).

46-48 contacts L-glutamine; it reads GES. The active-site Nucleophile is Cys-78. L-glutamine is bound by residues Arg-105 and 134-135; that span reads IR. Residues His-170 and Glu-172 each act as charge relay system in the active site.

This sequence belongs to the glutaminase PdxT/SNO family. In terms of assembly, in the presence of PdxS, forms a dodecamer of heterodimers. Only shows activity in the heterodimer.

The enzyme catalyses aldehydo-D-ribose 5-phosphate + D-glyceraldehyde 3-phosphate + L-glutamine = pyridoxal 5'-phosphate + L-glutamate + phosphate + 3 H2O + H(+). The catalysed reaction is L-glutamine + H2O = L-glutamate + NH4(+). It functions in the pathway cofactor biosynthesis; pyridoxal 5'-phosphate biosynthesis. Catalyzes the hydrolysis of glutamine to glutamate and ammonia as part of the biosynthesis of pyridoxal 5'-phosphate. The resulting ammonia molecule is channeled to the active site of PdxS. The sequence is that of Pyridoxal 5'-phosphate synthase subunit PdxT from Desulforamulus reducens (strain ATCC BAA-1160 / DSM 100696 / MI-1) (Desulfotomaculum reducens).